Here is a 583-residue protein sequence, read N- to C-terminus: ATP-dependent lipid A-core flippase (583 aa).

5 helical membrane-spanning segments follow: residues 27-47 (LAVAVVALIINAVSDTYMVSL), 69-89 (LLVFGLMFIRGISSFVSTYCL), 142-162 (ALVSIVREGTSIIGLLVLMFY), 165-185 (WQLSLVLILVAPVVAWAIGFV), and 249-269 (AAANPIIQMIASIAIVVVLYL). The region spanning 28 to 310 (AVAVVALIIN…LTNVTSQFQR (283 aa)) is the ABC transmembrane type-1 domain. One can recognise an ABC transporter domain in the interval 342-578 (VNVKDISFTY…DGAYAQLHRI (237 aa)). 376–383 (GRSGSGKS) contacts ATP.

The protein belongs to the ABC transporter superfamily. Lipid exporter (TC 3.A.1.106) family. In terms of assembly, homodimer.

It is found in the cell inner membrane. The enzyme catalyses ATP + H2O + lipid A-core oligosaccharideSide 1 = ADP + phosphate + lipid A-core oligosaccharideSide 2.. Its function is as follows. Involved in lipopolysaccharide (LPS) biosynthesis. Translocates lipid A-core from the inner to the outer leaflet of the inner membrane. Transmembrane domains (TMD) form a pore in the inner membrane and the ATP-binding domain (NBD) is responsible for energy generation. The protein is ATP-dependent lipid A-core flippase of Vibrio vulnificus (strain CMCP6).